The chain runs to 520 residues: Cytochrome P450 1A1 (520 aa).

Phenylalanine 230 contributes to the substrate binding site. Cysteine 464 contacts heme.

This sequence belongs to the cytochrome P450 family. The cofactor is heme.

The protein localises to the endoplasmic reticulum membrane. It localises to the microsome membrane. The enzyme catalyses an organic molecule + reduced [NADPH--hemoprotein reductase] + O2 = an alcohol + oxidized [NADPH--hemoprotein reductase] + H2O + H(+). Cytochromes P450 are a group of heme-thiolate monooxygenases. In liver microsomes, this enzyme is involved in an NADPH-dependent electron transport pathway. It oxidizes a variety of structurally unrelated compounds, including steroids, fatty acids, and xenobiotics. In Dicentrarchus labrax (European seabass), this protein is Cytochrome P450 1A1 (cyp1a1).